We begin with the raw amino-acid sequence, 521 residues long: Bifunctional purine biosynthesis protein PurH (521 aa).

In terms of domain architecture, MGS-like spans 1-149 (MSDPVIKRAL…KNNESVTVVT (149 aa)).

It belongs to the PurH family.

The enzyme catalyses (6R)-10-formyltetrahydrofolate + 5-amino-1-(5-phospho-beta-D-ribosyl)imidazole-4-carboxamide = 5-formamido-1-(5-phospho-D-ribosyl)imidazole-4-carboxamide + (6S)-5,6,7,8-tetrahydrofolate. It catalyses the reaction IMP + H2O = 5-formamido-1-(5-phospho-D-ribosyl)imidazole-4-carboxamide. It participates in purine metabolism; IMP biosynthesis via de novo pathway; 5-formamido-1-(5-phospho-D-ribosyl)imidazole-4-carboxamide from 5-amino-1-(5-phospho-D-ribosyl)imidazole-4-carboxamide (10-formyl THF route): step 1/1. The protein operates within purine metabolism; IMP biosynthesis via de novo pathway; IMP from 5-formamido-1-(5-phospho-D-ribosyl)imidazole-4-carboxamide: step 1/1. This Chlorobium phaeobacteroides (strain DSM 266 / SMG 266 / 2430) protein is Bifunctional purine biosynthesis protein PurH.